A 426-amino-acid chain; its full sequence is Elongation factor 1-alpha (426 aa).

A tr-type G domain is found at 5–221 (KPHINLAVIG…NALKEPEKPT (217 aa)). Positions 14–21 (GHIDHGKS) are G1. Position 14–21 (14–21 (GHIDHGKS)) interacts with GTP. Position 21 (Ser21) interacts with Mg(2+). Residues 70 to 74 (GITID) form a G2 region. Residues 91-94 (DCPG) are G3. GTP contacts are provided by residues 91 to 95 (DCPGH) and 146 to 149 (NKMD). Residues 146-149 (NKMD) are G4. Residues 185–187 (SAF) are G5.

It belongs to the TRAFAC class translation factor GTPase superfamily. Classic translation factor GTPase family. EF-Tu/EF-1A subfamily.

It localises to the cytoplasm. The catalysed reaction is GTP + H2O = GDP + phosphate + H(+). Its function is as follows. GTP hydrolase that promotes the GTP-dependent binding of aminoacyl-tRNA to the A-site of ribosomes during protein biosynthesis. The protein is Elongation factor 1-alpha of Methanocella arvoryzae (strain DSM 22066 / NBRC 105507 / MRE50).